A 285-amino-acid chain; its full sequence is Diaminopimelate epimerase (285 aa).

2 residues coordinate substrate: Asn15 and Asn68. Cys77 serves as the catalytic Proton donor. Substrate-binding positions include 78–79 (GN), Asn165, Asn201, and 219–220 (ER). Residue Cys228 is the Proton acceptor of the active site. 229–230 (GT) is a substrate binding site.

This sequence belongs to the diaminopimelate epimerase family. As to quaternary structure, homodimer.

It localises to the cytoplasm. The enzyme catalyses (2S,6S)-2,6-diaminopimelate = meso-2,6-diaminopimelate. It participates in amino-acid biosynthesis; L-lysine biosynthesis via DAP pathway; DL-2,6-diaminopimelate from LL-2,6-diaminopimelate: step 1/1. Functionally, catalyzes the stereoinversion of LL-2,6-diaminopimelate (L,L-DAP) to meso-diaminopimelate (meso-DAP), a precursor of L-lysine and an essential component of the bacterial peptidoglycan. This Synechococcus sp. (strain JA-3-3Ab) (Cyanobacteria bacterium Yellowstone A-Prime) protein is Diaminopimelate epimerase.